A 184-amino-acid chain; its full sequence is UPF0397 protein SAB2561c (184 aa).

The next 5 helical transmembrane spans lie at 11 to 31, 44 to 64, 77 to 97, 111 to 131, and 148 to 168; these read VVAI…VVIP, AFLA…TGLV, AWWS…WIGL, MIYF…LIAP, and QGVI…TILL.

It belongs to the UPF0397 family.

Its subcellular location is the cell membrane. The sequence is that of UPF0397 protein SAB2561c from Staphylococcus aureus (strain bovine RF122 / ET3-1).